Consider the following 148-residue polypeptide: Ribonuclease pancreatic (148 aa).

A signal peptide spans 1-25; sequence MGLEKSLILFPLLVLVVGWVQPSLG. Substrate-binding positions include K32, R35, 65 to 69, K90, and R109; that span reads KPVNT. Intrachain disulfides connect C50–C108, C64–C119, C82–C134, and C89–C96. H143 serves as the catalytic Proton donor.

This sequence belongs to the pancreatic ribonuclease family. In terms of assembly, monomer. Interacts with and forms tight 1:1 complexes with RNH1. Dimerization of two such complexes may occur. Interaction with RNH1 inhibits this protein. Pancreas.

The protein resides in the secreted. The enzyme catalyses an [RNA] containing cytidine + H2O = an [RNA]-3'-cytidine-3'-phosphate + a 5'-hydroxy-ribonucleotide-3'-[RNA].. It carries out the reaction an [RNA] containing uridine + H2O = an [RNA]-3'-uridine-3'-phosphate + a 5'-hydroxy-ribonucleotide-3'-[RNA].. In terms of biological role, endonuclease that catalyzes the cleavage of RNA on the 3' side of pyrimidine nucleotides. Acts on single-stranded and double-stranded RNA. The polypeptide is Ribonuclease pancreatic (RNASE1) (Peromyscus leucopus (White-footed mouse)).